The sequence spans 284 residues: 2-dehydro-3-deoxyphosphooctonate aldolase (284 aa).

This sequence belongs to the KdsA family.

Its subcellular location is the cytoplasm. It catalyses the reaction D-arabinose 5-phosphate + phosphoenolpyruvate + H2O = 3-deoxy-alpha-D-manno-2-octulosonate-8-phosphate + phosphate. Its pathway is carbohydrate biosynthesis; 3-deoxy-D-manno-octulosonate biosynthesis; 3-deoxy-D-manno-octulosonate from D-ribulose 5-phosphate: step 2/3. The protein operates within bacterial outer membrane biogenesis; lipopolysaccharide biosynthesis. This chain is 2-dehydro-3-deoxyphosphooctonate aldolase, found in Burkholderia cenocepacia (strain HI2424).